The sequence spans 86 residues: UPF0367 protein PMN2A_1492 (86 aa).

This sequence belongs to the UPF0367 family.

The polypeptide is UPF0367 protein PMN2A_1492 (Prochlorococcus marinus (strain NATL2A)).